The chain runs to 1003 residues: Leucine-rich repeat receptor-like serine/threonine-protein kinase BAM1 (1003 aa).

The first 19 residues, 1–19, serve as a signal peptide directing secretion; it reads MKLFLLLLFLLHISHTFTA. At 20–640 the chain is on the extracellular side; that stretch reads SRPISEFRAL…HSKGPLSASM (621 aa). LRR repeat units follow at residues 68–92, 93–116, 117–140, 142–165, 166–191, 193–213, 215–238, 239–262, 263–285, 286–310, 312–334, 335–358, 359–382, 385–406, 407–430, 432–454, 455–480, 482–502, 503–526, 527–550, 551–574, and 575–598; these read RRHV…VSHL, RLLQ…ISSL, SGLR…ISSG, VNLR…VTNL, TQLR…SWPV, EYLA…IGNL, TLRE…IGNL, SELV…IGKL, QKLD…ELGT, LSSL…FAEL, NLTL…IGDL, PELE…LGEN, GKLN…MCSG, LETL…LGKC, ESLT…LFGL, KLTQ…GGVS, VNLG…NFTG, QKLL…VGKL, QQLS…ISRC, KLLT…ITAM, KILN…ISSM, and QSLT…GQFS. N-linked (GlcNAc...) asparagine glycosylation is found at Asn-80, Asn-97, Asn-123, Asn-130, Asn-153, and Asn-164. 2 N-linked (GlcNAc...) asparagine glycosylation sites follow: Asn-212 and Asn-237. Asn-312 and Asn-346 each carry an N-linked (GlcNAc...) asparagine glycan. Asn-420 carries an N-linked (GlcNAc...) asparagine glycan. Asn-477 carries an N-linked (GlcNAc...) asparagine glycan. 3 N-linked (GlcNAc...) asparagine glycosylation sites follow: Asn-557, Asn-586, and Asn-601. The chain crosses the membrane as a helical span at residues 641–661; it reads KLLLVLGLLVCSIAFAVVAII. Over 662-1003 the chain is Cytoplasmic; sequence KARSLKKASE…VQSPPDLLNL (342 aa). Residue Thr-686 is modified to Phosphothreonine. The Protein kinase domain maps to 694–971; that stretch reads LKEDNIIGKG…VQILTEIPKL (278 aa). ATP contacts are provided by residues 700–708 and Lys-722; that span reads IGKGGAGIV. A phosphotyrosine mark is found at Tyr-769 and Tyr-807. Asp-820 (proton acceptor) is an active-site residue. Ser-855 carries the phosphoserine modification. Tyr-863 and Tyr-870 each carry phosphotyrosine. Thr-871 carries the post-translational modification Phosphothreonine. The tract at residues 969-1003 is disordered; it reads PKLPPSKDQPMTESAPESELSPKSGVQSPPDLLNL. Ser-996 bears the Phosphoserine mark.

Belongs to the protein kinase superfamily. Ser/Thr protein kinase family. As to quaternary structure, self-interacts and interacts with BAM2 and CLV1. Binds to the CLV3, CLE5, CLE11, CLE18, CLE19, CLE22, CLE25, CLE26, CLE40, CLE41 and CLE42 mature peptides, probably via its extracellular leucine-rich repeat region. Expressed in seedlings, roots, leaves, inflorescences, flowers and siliques.

The protein resides in the cell membrane. The catalysed reaction is L-seryl-[protein] + ATP = O-phospho-L-seryl-[protein] + ADP + H(+). It catalyses the reaction L-threonyl-[protein] + ATP = O-phospho-L-threonyl-[protein] + ADP + H(+). Functionally, necessary for male gametophyte development, as well as ovule specification and function. Involved in cell-cell communication process required during early anther development, and regulating cell division and differentiation to organize cell layers. Required for the development of high-ordered vascular strands within the leaf and a correlated control of leaf shape, size and symmetry. May regulate the CLV1-dependent CLV3-mediated signaling in meristems maintenance. The sequence is that of Leucine-rich repeat receptor-like serine/threonine-protein kinase BAM1 (BAM1) from Arabidopsis thaliana (Mouse-ear cress).